Here is a 376-residue protein sequence, read N- to C-terminus: WD repeat-containing protein wdr-5.1 (376 aa).

The span at 1-24 (MDTSENAASAAEQQPTQQIDQLTV) shows a compositional bias: polar residues. Residues 1–70 (MDTSENAASA…TPNPNAAGAS (70 aa)) form a disordered region. The segment covering 25–53 (PNAPDGGSSAPAPSTSPNSISPSNPTGTP) has biased composition (low complexity). 7 WD repeats span residues 85 to 115 (GHTK…KIWN), 127 to 157 (GHKL…KIFE), 169 to 199 (GHNN…RIWD), 211 to 241 (AHSD…RIWD), 254 to 284 (DENP…KLWD), 296 to 329 (GHEN…YIWN), and 341 to 373 (GHTQ…HIWR).

Belongs to the WD repeat WDR5/wds family. Component of the SET2 complex (also known as the SET1/COMPASS complex), which contains at least set-2, swd-2.1, cfp-1, rbbp-5, wdr-5.1, dpy-30 and ash-2. Within the complex, interacts with cfp-1, ash-2, dpy-30 and hda-1. Interacts with histone H3 both unmethylated and methylated at 'Lys-4'. Interacts with jmjd-3.1, ceh-6, sox-2, sem-4 and egl-27. Interacts with set-2. In terms of tissue distribution, enriched in the germline. Detected in all nuclei of the embryo. In larvae, expression is detected in the nuclei of seam cells, somatic gonad precursor cells Z1 and Z4, vulval precursor cells, distal tip cells, hypodermal cells, intestinal and muscle cells. Also detected in the neurons from the ventral nerve cord, head and tail region. Expressed in the head and tail region, intestinal cells, muscle cells, cells of the vulva, spermatheca and sheath cells in adults.

The protein resides in the nucleus. Its function is as follows. Contributes to histone modification. May position the N-terminus of histone H3 for efficient trimethylation at 'Lys-4'. Required for di- and trimethylation, particularly for the trimethylation at 'Lys-4' of histone H3. Not required for demethylation of histone H3 'Lys-27'. H3 'Lys-4' methylation represents a specific tag for epigenetic transcriptional activation, germline establishment, maintenance and function. Implicated in the epigenetic inheritance of lifespan over several generations. Acts in the germline to limit the longevity of the soma, probably by regulating a lipid metabolism pathway that signals from the germline to the intestine, thereby preventing accumulation of mono-unsaturated fatty acids. Required for RNA interference with probable antagonistic role against hpl-2 function. Plays a role in vulval cell fate specification by acting in the synthetic multivulva pathway independent of set-2. Sex determining protein required in the germline to promote the spermatogenesis to oogenesis switch during the late larval stages of development. Acts with the sex determining factor tra-1, and redundantly with wdr-5.2, to regulate fog-3 expression, which in turn determines germ cell fate. Cooperates with jmjd-3.1, egl-27 and unc-3 to ensure robust transdifferentiation of the Y rectal cell to the PDA motor neuron during larval development. The sequence is that of WD repeat-containing protein wdr-5.1 (wdr-5.1) from Caenorhabditis elegans.